Consider the following 211-residue polypeptide: Large ribosomal subunit protein uL3 (211 aa).

This sequence belongs to the universal ribosomal protein uL3 family. As to quaternary structure, part of the 50S ribosomal subunit. Forms a cluster with proteins L14 and L19.

Its function is as follows. One of the primary rRNA binding proteins, it binds directly near the 3'-end of the 23S rRNA, where it nucleates assembly of the 50S subunit. This is Large ribosomal subunit protein uL3 from Citrifermentans bemidjiense (strain ATCC BAA-1014 / DSM 16622 / JCM 12645 / Bem) (Geobacter bemidjiensis).